A 512-amino-acid chain; its full sequence is Reduced folate transporter (512 aa).

Met1 is modified (N-acetylmethionine). Topologically, residues 1-29 are cytoplasmic; the sequence is MVPTGQVAEKQAYEEPRQDHELKSWRCLV. A helical transmembrane segment spans residues 30 to 50; it reads FYLCFFGFMAQLRPGESFITP. Folate contacts are provided by Ile48 and Thr49. The Extracellular portion of the chain corresponds to 51 to 62; sequence FLLERKFTKEQV. A helical membrane pass occupies residues 63 to 85; that stretch reads TNEIIPMLPYSHLAVLVPVFLLT. The Cytoplasmic segment spans residues 86-89; the sequence is DYLR. Residues 90 to 110 traverse the membrane as a helical segment; sequence YKPVLVLQCLSFVCVWLLLLL. Residues 111–114 are Extracellular-facing; sequence GTSV. The helical transmembrane segment at 115–137 threads the bilayer; sequence VHMQLMEVFYSVTMAARIAYSSY. Residues Glu121 and Arg131 each coordinate folate. Topologically, residues 138 to 151 are cytoplasmic; sequence IFSLVHPSRYQRMA. The chain crosses the membrane as a helical span at residues 152–176; the sequence is SYSRAAVLLGVFISSVLGQALVTVG. Val162 contributes to the folate binding site. Over 177 to 181 the chain is Extracellular; sequence HISTY. Residues 182 to 200 traverse the membrane as a helical segment; that stretch reads TLNCVSLGFILFSLVLSLF. Residues 201–266 lie on the Cytoplasmic side of the membrane; the sequence is LKRPKRSLFF…ELVENARQPQ (66 aa). The chain crosses the membrane as a helical span at residues 267–292; the sequence is LRLWCLWWVFNSSGYYLITYYVHVLW. The folate site is built by Tyr281, Tyr282, and Tyr286. The Extracellular segment spans residues 293-300; the sequence is RSTDSSLS. A helical membrane pass occupies residues 301 to 323; the sequence is YNGAVDAASTLLSAITSFSAGFL. At 324–329 the chain is on the cytoplasmic side; it reads SIRWTL. The helical transmembrane segment at 330 to 350 threads the bilayer; that stretch reads WSKLVIAGVIAIQASLVFCMF. Residues 351 to 353 are Extracellular-facing; the sequence is QIR. Residues 354-377 form a helical membrane-spanning segment; sequence DIWVCYVTFVLFRGAYQFLVPIAT. Residues Arg366 and Gln370 each coordinate folate. The Cytoplasmic portion of the chain corresponds to 378 to 391; it reads FQIASSLSKELCAL. The helical transmembrane segment at 392-415 threads the bilayer; sequence VFGINTFLATALKTCITLVVSDKR. The segment at 400-412 is required for substrate-binding; the sequence is ATALKTCITLVVS. The Extracellular segment spans residues 416–423; sequence GLGLQVRD. A helical membrane pass occupies residues 424–448; that stretch reads QFRIYFIYFLMLSITCFAWAGLDGL. Over 449-512 the chain is Cytoplasmic; the sequence is RYCQRGRHQP…RGDLRVEAKA (64 aa). Residues Ser467, Ser472, and Ser477 each carry the phosphoserine modification. The tract at residues 478–512 is disordered; it reads LQDGDLRGPQPSAPQLLSEDGMEDDRGDLRVEAKA.

Belongs to the reduced folate carrier (RFC) transporter (TC 2.A.48) family.

Its subcellular location is the cell membrane. The protein localises to the apical cell membrane. The protein resides in the basolateral cell membrane. It carries out the reaction 5-amino-1-(5-phospho-beta-D-ribosyl)imidazole-4-carboxamide(in) + (6S)-5-methyl-5,6,7,8-tetrahydrofolate(out) = 5-amino-1-(5-phospho-beta-D-ribosyl)imidazole-4-carboxamide(out) + (6S)-5-methyl-5,6,7,8-tetrahydrofolate(in). In terms of biological role, antiporter that mediates the import of reduced folates, driven by the export of organic anions. Also acts as an importer of immunoreactive cyclic dinucleotides, but with a lower transporter activity. Mechanistically, acts as a secondary active transporter, which exports intracellular organic anions down their concentration gradients to facilitate the uptake of its substrates. Has high affinity for N5-methyltetrahydrofolate, the predominant circulating form of folate. Also mediates the import of antifolate drug methotrexate. 5-amino-4-imidazolecarboxamide riboside (AICAR), when phosphorylated to AICAR monophosphate, can serve as an organic anion for antiporter activity. This Mus musculus (Mouse) protein is Reduced folate transporter.